Here is a 179-residue protein sequence, read N- to C-terminus: ATP-dependent protease subunit HslV (179 aa).

Threonine 9 is an active-site residue. Na(+) is bound by residues alanine 164, cysteine 167, and threonine 170.

This sequence belongs to the peptidase T1B family. HslV subfamily. In terms of assembly, a double ring-shaped homohexamer of HslV is capped on each side by a ring-shaped HslU homohexamer. The assembly of the HslU/HslV complex is dependent on binding of ATP.

The protein resides in the cytoplasm. The catalysed reaction is ATP-dependent cleavage of peptide bonds with broad specificity.. Its activity is regulated as follows. Allosterically activated by HslU binding. Functionally, protease subunit of a proteasome-like degradation complex believed to be a general protein degrading machinery. In Syntrophobacter fumaroxidans (strain DSM 10017 / MPOB), this protein is ATP-dependent protease subunit HslV.